We begin with the raw amino-acid sequence, 541 residues long: 2-succinyl-5-enolpyruvyl-6-hydroxy-3-cyclohexene-1-carboxylate synthase (541 aa).

It belongs to the TPP enzyme family. MenD subfamily. In terms of assembly, homodimer. Mg(2+) serves as cofactor. Requires Mn(2+) as cofactor. Thiamine diphosphate is required as a cofactor.

The enzyme catalyses isochorismate + 2-oxoglutarate + H(+) = 5-enolpyruvoyl-6-hydroxy-2-succinyl-cyclohex-3-ene-1-carboxylate + CO2. It participates in quinol/quinone metabolism; 1,4-dihydroxy-2-naphthoate biosynthesis; 1,4-dihydroxy-2-naphthoate from chorismate: step 2/7. The protein operates within quinol/quinone metabolism; menaquinone biosynthesis. In terms of biological role, catalyzes the thiamine diphosphate-dependent decarboxylation of 2-oxoglutarate and the subsequent addition of the resulting succinic semialdehyde-thiamine pyrophosphate anion to isochorismate to yield 2-succinyl-5-enolpyruvyl-6-hydroxy-3-cyclohexene-1-carboxylate (SEPHCHC). This Rhodococcus opacus (strain B4) protein is 2-succinyl-5-enolpyruvyl-6-hydroxy-3-cyclohexene-1-carboxylate synthase.